The following is a 751-amino-acid chain: 1,3-beta-galactosyl-N-acetylhexosamine phosphorylase (751 aa).

Residue D313 is the Proton donor of the active site.

It belongs to the glycoside hydrolase 112 family. In terms of assembly, homodimer.

It carries out the reaction beta-D-galactosyl-(1-&gt;3)-N-acetyl-D-glucosamine + phosphate = alpha-D-galactose 1-phosphate + N-acetyl-D-glucosamine. Its function is as follows. Reversibly phosphorolyzes lacto-N-biose to Gal1-P and N-acetylglucosamine (GlcNAc) and galacto-N-biose to Gal1-P and N-acetylgalactosamine (GalNAc). Involved in the lacto-N-biose I/galacto-N-biose (LNB/GNB) degradation pathway, which is important for host intestinal colonization by bifidobacteria. The chain is 1,3-beta-galactosyl-N-acetylhexosamine phosphorylase (lnpA) from Bifidobacterium longum subsp. longum (strain ATCC 15707 / DSM 20219 / JCM 1217 / NCTC 11818 / E194b).